The chain runs to 1004 residues: MLRNAAAGARKAVTELSQFPKPGEKLHGFTLVRSKHVPELELTALHLQHDKTGADYLHIARDDSNNVFSIGFKTNPPDDTGIPHILEHTTLCGSEKYPIRDPFFKMLPRTLSNFMNAFTASDHTFYPFATTNAQDFKNLMSVYLDSTLHPLLKKSDFTQEGWRIGPENPLAEDEASKKLVFKGVVYNEMKGQMSDAGYLYYIRFHDHIFPDINNSGGDPQKITDLTYEQLQKFHAEHYHPSNAKVFTYGDMPLIDHLKQVDTQLQAFEKIQGDKQVHEPVTLNGPKEVTLYGPLDPLVDQDRQYKTSVSWIMGDTTDVLESFSLALLSTLLMDGYGSPLYRGLIEAGMGADWSPNAGYDSSAKKGIFSIGLTGVQEGDVPKLKEKVQQILRDARNKGFDKTKIDGSLHQLELSLKHKTANFGFSMLNRLKPKWFNGVDPFDSLAWNDTINGFQAKMAEGNYLEGLIDKYLLNDNTLTFTMAPSTTYGEDLVKEEQERLSTRIQAAIKEAGSEEKARKHFEKQEQELLVEQNKTNTEDLGCLPTVHVKDIPRSKEAVVVRDENANGTKIQWHEAPTNGLTYFRAINTLENLPDELRELVPLFTDSIMRLGTKDLNMEQLEDLIKLKTGGVSVGYHCTPSPTDFHAASEGIIFTGMALDHNVPVMFDIIQKLVLGTDFDSPEAALRIRQLLQASADGVVNDIASTGHRFAMGSAESGLTRSAWLRQQVSGLSQVQLVTSLASRPETDKLEDVISKLKQIQNLALVGGNLRTAITCGSESVAANGASLQNFVGNLSRDPLNLKNPSPRQLPKDSKTFYPLPYQVYYGGLSLPTTSYTSAEGAPLQILSQLLTHKHLHHEIREKGGAYGGGAYSRALDGLFGFYSYRDPNPQNTLSIMRNAGQWAVDKKWSDRDLEEAKISVFQGVDAPKSVNQEGMGRFLSGITEEMKQKKREQFLDVTKDQVREAAQRYLVDGLAKGEGRVAFLGEKQAWVDGEWQIREMDVKGAE.

A mitochondrion-targeting transit peptide spans Met-1 to Ser-34. His-84 provides a ligand contact to Zn(2+). Glu-87 serves as the catalytic Proton acceptor. His-88 contacts Zn(2+). Glu-160 is a catalytic residue. Zn(2+) is bound at residue Glu-188.

The protein belongs to the peptidase M16 family. PreP subfamily. In terms of assembly, monomer and homodimer; homodimerization is induced by binding of the substrate. Requires Zn(2+) as cofactor.

The protein resides in the mitochondrion intermembrane space. It localises to the mitochondrion matrix. Its function is as follows. Degrades mitochondrial transit peptides after their cleavage in the intermembrane space or in the matrix, and presequence peptides; clearance of these peptides is required to keep the presequence processing machinery running. Preferentially cleaves the N-terminal side of paired basic amino acid residues. Also degrades other unstructured peptides. May function as an ATP-dependent peptidase as opposed to a metalloendopeptidase. This chain is Presequence protease, mitochondrial (CYM1), found in Gibberella zeae (strain ATCC MYA-4620 / CBS 123657 / FGSC 9075 / NRRL 31084 / PH-1) (Wheat head blight fungus).